We begin with the raw amino-acid sequence, 418 residues long: Probable serine/threonine-protein kinase DDB_G0280461 (418 aa).

Positions Lys-14–Ile-271 constitute a Protein kinase domain. ATP-binding positions include Phe-20–Val-28 and Lys-41. Asp-139 functions as the Proton acceptor in the catalytic mechanism. Disordered regions lie at residues Asn-327–Asn-356 and Ser-377–Asn-418. Positions Ser-377–Gly-402 are enriched in low complexity. Residues Gly-403 to Asn-418 are compositionally biased toward basic residues.

This sequence belongs to the protein kinase superfamily. TKL Ser/Thr protein kinase family.

It carries out the reaction L-seryl-[protein] + ATP = O-phospho-L-seryl-[protein] + ADP + H(+). The enzyme catalyses L-threonyl-[protein] + ATP = O-phospho-L-threonyl-[protein] + ADP + H(+). This is Probable serine/threonine-protein kinase DDB_G0280461 from Dictyostelium discoideum (Social amoeba).